The sequence spans 928 residues: Heme/hemopexin-binding protein (928 aa).

The signal sequence occupies residues 1–21; sequence MYKLNVISLIILTTCSGAAYA. Repeat copies occupy residues 101–106, 149–154, 155–160, 161–166, 167–172, 205–210, 279–284, 410–415, 635–640, and 674–679. Residues 101–679 are 6 X 6 AA approximate repeats; that stretch reads NGKVYLANPN…RLGMNGKVSM (579 aa). A 4 X 6 AA approximate tandem repeats region spans residues 149–172; that stretch reads KDRQVLKEGLVLKDGQVVKEGQVI.

It is found in the secreted. Functionally, binds heme/hemopexin complexes. This is Heme/hemopexin-binding protein (hxuA) from Haemophilus influenzae.